A 210-amino-acid chain; its full sequence is MTEVQKLTNNKEVIAYLVEKFPLCFSLEGEAKPLKIGLFQDLAEALQDDERVSKTQLRQALRAYTSNWRYLHGCKAGAERVDLQGNVCGILEQEHAEHAAQQLAEAKAKVAAMRAAEKAAKPEKKRPARRVAAKGQHAKETTTNKAKVTRKPKVILNAIELASLQKGDSVKVKVGESAKKAIVLEVVKDSARVQLENGLVITVTAEHLFA.

Residues 118-146 (KAAKPEKKRPARRVAAKGQHAKETTTNKA) are disordered. Positions 123-132 (EKKRPARRVA) are enriched in basic residues.

The protein belongs to the ProQ family.

The protein resides in the cytoplasm. RNA chaperone with significant RNA binding, RNA strand exchange and RNA duplexing activities. This chain is RNA chaperone ProQ, found in Pasteurella multocida (strain Pm70).